The chain runs to 668 residues: Fructose-1,6-bisphosphatase class 3 (668 aa).

This sequence belongs to the FBPase class 3 family. Mn(2+) serves as cofactor.

It catalyses the reaction beta-D-fructose 1,6-bisphosphate + H2O = beta-D-fructose 6-phosphate + phosphate. The protein operates within carbohydrate biosynthesis; gluconeogenesis. This chain is Fructose-1,6-bisphosphatase class 3, found in Clostridium botulinum (strain Langeland / NCTC 10281 / Type F).